The primary structure comprises 273 residues: Undecaprenyl-diphosphatase (273 aa).

Transmembrane regions (helical) follow at residues 6-26 (SLLI…LPVS), 45-65 (AKTF…VMFW), 90-110 (LTLI…LLFH), 116-136 (LFNP…LIAA), 190-210 (YAAS…ATAL), 222-242 (GDIP…LIAI), and 252-272 (ISFI…YVVF).

The protein belongs to the UppP family.

It localises to the cell inner membrane. It carries out the reaction di-trans,octa-cis-undecaprenyl diphosphate + H2O = di-trans,octa-cis-undecaprenyl phosphate + phosphate + H(+). Catalyzes the dephosphorylation of undecaprenyl diphosphate (UPP). Confers resistance to bacitracin. The protein is Undecaprenyl-diphosphatase of Escherichia coli O7:K1 (strain IAI39 / ExPEC).